A 509-amino-acid chain; its full sequence is MWIALLGSSLLIGALWLLLRQLNKTYFILSLCKRVRTADGSPLESKVFVVPGKTRFGNNLDLLNLTPANIFSYIRESTAKANGQNYIWNFLFAPEYNIVRAEDAEEIFQSTKITTKNMSYELIRPFLGDGLLISIDQKWHTRRKTLTPAFHFNILQSFLSIFKEESKKFIKILDKNVGFELELNQIIPQFTLNNICETALGVKLDDMSEGNEYRKAIHDFEIVFNQRMCNPLMFFNWYFFLFGDYKKYSRILRTIHGFSSGIIQRKRQQFKQKQLGQVDEFGKKQRYAMLDTLLAAEAEGKIDHQGICDEVNTFMFGGYDTTSTSLIFTLLLLALHADVQERCYEELQDLPEDIDEVSMFQFNELIHLECVIKESLRLFPSAPIIGRTCIEESVMNGLVLPKNAQISIHIYDIMRDARHFPKPNQFLPERFLPENSVNRHPFAFVPFSAGPRNCIGQKFGVLEIKVLLAAVIRNFKLLPATQLEDLTFENGIVLRTQQNIKVKFEARVK.

Cysteine 454 is a heme binding site.

It belongs to the cytochrome P450 family. Heme serves as cofactor.

It is found in the endoplasmic reticulum membrane. Its subcellular location is the microsome membrane. May be involved in the metabolism of insect hormones and in the breakdown of synthetic insecticides. The sequence is that of Probable cytochrome P450 4ac3 (Cyp4ac3) from Drosophila melanogaster (Fruit fly).